The following is a 319-amino-acid chain: tRNA uridine(34) hydroxylase (319 aa).

The region spanning 127–221 is the Rhodanese domain; that stretch reads KQEDTVIIDA…YGKDPEVQGE (95 aa). The active-site Cysteine persulfide intermediate is the cysteine 181.

Belongs to the TrhO family.

It catalyses the reaction uridine(34) in tRNA + AH2 + O2 = 5-hydroxyuridine(34) in tRNA + A + H2O. In terms of biological role, catalyzes oxygen-dependent 5-hydroxyuridine (ho5U) modification at position 34 in tRNAs. This chain is tRNA uridine(34) hydroxylase, found in Bacillus cereus (strain ZK / E33L).